The primary structure comprises 1793 residues: Transposon Ty1-H Gag-Pol polyprotein (1793 aa).

3 stretches are compositionally biased toward polar residues: residues 1–10, 48–60, and 127–152; these read MESQQLSNYP, TKAN…TPAS, and QSQF…GNTF. Disordered regions lie at residues 1 to 84, 126 to 174, and 390 to 459; these read MESQ…QNGP, PQSQ…PPPM, and GSRN…SKST. A compositionally biased stretch (low complexity) spans 153–165; the sequence is TDSSSADSDMTST. The RNA-binding stretch occupies residues 337–439; it reads NNGIHINNKV…NSKSKTARAH (103 aa). Positions 440 to 456 are enriched in low complexity; sequence NVSTSNNSPSTDNDSIS. Aspartate 499 functions as the For protease activity; shared with dimeric partner in the catalytic mechanism. The integrase-type zinc finger-like stretch occupies residues 621–678; that stretch reads NVHTSESTRKYPYPFIHRMLAHANAQTIRYSLKNNTITYFNESDVDWSSAIDYQCPDC. The region spanning 698–873 is the Integrase catalytic domain; the sequence is NSYEPFQYLH…AGLDISTLLP (176 aa). Mg(2+) contacts are provided by aspartate 709 and aspartate 774. The disordered stretch occupies residues 996-1208; the sequence is AVSPTDSTPP…SSLGGIGDSN (213 aa). A compositionally biased stretch (low complexity) spans 998–1007; the sequence is SPTDSTPPST. Residues 1043-1053 show a composition bias toward polar residues; that stretch reads STPQISDIEST. Residues 1076-1091 show a composition bias toward basic and acidic residues; that stretch reads ESSHASKSKDFRHSDS. Polar residues-rich tracts occupy residues 1092-1120 and 1133-1144; these read YSDN…QTSE and SIDTSSSESNSL. The short motif at 1216–1250 is the Bipartite nuclear localization signal element; that stretch reads KKRSLEDNETEIKVSRDTWNTKNMRSLEPPRSKKR. The Reverse transcriptase Ty1/copia-type domain maps to 1376 to 1514; the sequence is NNYYITQLDI…DILGLEIKYQ (139 aa). Positions 1384, 1465, 1466, 1648, 1690, and 1723 each coordinate Mg(2+). The region spanning 1648–1790 is the RNase H Ty1/copia-type domain; it reads DASYGNQPYY…IKTFKLLTNK (143 aa).

The capsid protein forms a homotrimer, from which the VLPs are assembled. The protease is a homodimer, whose active site consists of two apposed aspartic acid residues. Initially, virus-like particles (VLPs) are composed of the structural unprocessed proteins Gag and Gag-Pol, and also contain the host initiator methionine tRNA (tRNA(i)-Met) which serves as a primer for minus-strand DNA synthesis, and a dimer of genomic Ty RNA. Processing of the polyproteins occurs within the particle and proceeds by an ordered pathway, called maturation. First, the protease (PR) is released by autocatalytic cleavage of the Gag-Pol polyprotein yielding capsid protein p45 and a Pol-p154 precursor protein. This cleavage is a prerequisite for subsequent processing of Pol-p154 at the remaining sites to release the mature structural and catalytic proteins. Maturation takes place prior to the RT reaction and is required to produce transposition-competent VLPs.

It localises to the cytoplasm. The protein resides in the nucleus. The catalysed reaction is DNA(n) + a 2'-deoxyribonucleoside 5'-triphosphate = DNA(n+1) + diphosphate. It carries out the reaction Endonucleolytic cleavage to 5'-phosphomonoester.. Its function is as follows. Capsid protein (CA) is the structural component of the virus-like particle (VLP), forming the shell that encapsulates the retrotransposons dimeric RNA genome. The particles are assembled from trimer-clustered units and there are holes in the capsid shells that allow for the diffusion of macromolecules. CA also has nucleocapsid-like chaperone activity, promoting primer tRNA(i)-Met annealing to the multipartite primer-binding site (PBS), dimerization of Ty1 RNA and initiation of reverse transcription. In terms of biological role, the aspartyl protease (PR) mediates the proteolytic cleavages of the Gag and Gag-Pol polyproteins after assembly of the VLP. Functionally, reverse transcriptase/ribonuclease H (RT) is a multifunctional enzyme that catalyzes the conversion of the retro-elements RNA genome into dsDNA within the VLP. The enzyme displays a DNA polymerase activity that can copy either DNA or RNA templates, and a ribonuclease H (RNase H) activity that cleaves the RNA strand of RNA-DNA heteroduplexes during plus-strand synthesis and hydrolyzes RNA primers. The conversion leads to a linear dsDNA copy of the retrotransposon that includes long terminal repeats (LTRs) at both ends. Integrase (IN) targets the VLP to the nucleus, where a subparticle preintegration complex (PIC) containing at least integrase and the newly synthesized dsDNA copy of the retrotransposon must transit the nuclear membrane. Once in the nucleus, integrase performs the integration of the dsDNA into the host genome. In Saccharomyces cerevisiae (strain ATCC 204508 / S288c) (Baker's yeast), this protein is Transposon Ty1-H Gag-Pol polyprotein (TY1B-H).